The primary structure comprises 280 residues: Dexamethasone-induced Ras-related protein 1 (280 aa).

At Cys-11 the chain carries S-nitrosocysteine. Gly-31–Thr-38 serves as a coordination point for GTP. Residues Tyr-53 to His-61 carry the Effector region motif. Residues Asp-78–Asn-82 and Asn-145–Asp-148 contribute to the GTP site. Cys-277 is subject to Cysteine methyl ester. The S-farnesyl cysteine moiety is linked to residue Cys-277. A propeptide spans Val-278 to Ser-280 (removed in mature form).

Belongs to the small GTPase superfamily. RasD family. In terms of assembly, forms a ternary complex with CAPON and NOS1. Component of a complex, at least composed of APBB1, RASD1/DEXRAS1 and APP. Interacts with APBB1/FE65. Forms. Post-translationally, S-nitrosylation stimulates guanine-nucleotide exchange activity. As to expression, prominently found in brain at both mRNA and protein levels. Moderate expression in testis and lung. Slightly expressed in heart, spleen, skeletal muscle, liver and kidney.

Its subcellular location is the cell membrane. It localises to the cytoplasm. It is found in the perinuclear region. The protein localises to the nucleus. Its function is as follows. Small GTPase. Negatively regulates the transcription regulation activity of the APBB1/FE65-APP complex via its interaction with APBB1/FE65. This chain is Dexamethasone-induced Ras-related protein 1 (Rasd1), found in Rattus norvegicus (Rat).